A 118-amino-acid chain; its full sequence is Cell division protein SepF (118 aa).

The interval 1 to 12 is important for localization in a ring-like structure at midcell; sequence MGIMSKILGGGG.

As to quaternary structure, homodimer. Does not oligomerize. Interacts with FtsZ2.

It localises to the cytoplasm. In terms of biological role, involved in cell division. Probably acts as a membrane anchor for FstZ2, tethering its filaments to the division site. May be involved in septum closure. This Haloferax volcanii (strain ATCC 29605 / DSM 3757 / JCM 8879 / NBRC 14742 / NCIMB 2012 / VKM B-1768 / DS2) (Halobacterium volcanii) protein is Cell division protein SepF.